The chain runs to 1179 residues: RecBCD enzyme subunit RecB (1179 aa).

The DNA-binding and helicase activity, interacts with RecC stretch occupies residues Met-1–Tyr-859. In terms of domain architecture, UvrD-like helicase ATP-binding spans Asn-18–Ser-459. Ala-39–Thr-46 is an ATP binding site. The UvrD-like helicase C-terminal domain maps to Glu-485 to Gly-755. Residues Tyr-910–Lys-1179 are nuclease activity, interacts with RecD and RecA. Residues His-962, Asp-1073, and Asp-1086 each coordinate Mg(2+). The active-site For nuclease activity is Asp-1086.

This sequence belongs to the helicase family. UvrD subfamily. Heterotrimer of RecB, RecC and RecD. All subunits contribute to DNA-binding. Interacts with RecA. Mg(2+) serves as cofactor.

The catalysed reaction is Exonucleolytic cleavage (in the presence of ATP) in either 5'- to 3'- or 3'- to 5'-direction to yield 5'-phosphooligonucleotides.. It catalyses the reaction Couples ATP hydrolysis with the unwinding of duplex DNA by translocating in the 3'-5' direction.. It carries out the reaction ATP + H2O = ADP + phosphate + H(+). In terms of biological role, a helicase/nuclease that prepares dsDNA breaks (DSB) for recombinational DNA repair. Binds to DSBs and unwinds DNA via a highly rapid and processive ATP-dependent bidirectional helicase activity. Unwinds dsDNA until it encounters a Chi (crossover hotspot instigator) sequence from the 3' direction. Cuts ssDNA a few nucleotides 3' to the Chi site. The properties and activities of the enzyme are changed at Chi. The Chi-altered holoenzyme produces a long 3'-ssDNA overhang and facilitates RecA-binding to the ssDNA for homologous DNA recombination and repair. Holoenzyme degrades any linearized DNA that is unable to undergo homologous recombination. In the holoenzyme this subunit contributes ATPase, 3'-5' helicase, exonuclease activity and loads RecA onto ssDNA. The protein is RecBCD enzyme subunit RecB of Buchnera aphidicola subsp. Schizaphis graminum (strain Sg).